Consider the following 590-residue polypeptide: DEAD-box ATP-dependent RNA helicase 27 (590 aa).

The interval methionine 1–isoleucine 92 is disordered. The segment covering serine 27–glutamate 62 has biased composition (acidic residues). The stretch at alanine 40–glutamate 87 forms a coiled coil. Residues glutamate 63–lysine 76 are compositionally biased toward basic and acidic residues. Positions methionine 96–alanine 124 match the Q motif motif. In terms of domain architecture, Helicase ATP-binding spans isoleucine 127–serine 302. Alanine 140–threonine 147 is a binding site for ATP. The DEAD box signature appears at aspartate 250–aspartate 253. Residues arginine 335–leucine 488 enclose the Helicase C-terminal domain. Residues serine 551–phenylalanine 590 are disordered. The segment covering lysine 579–phenylalanine 590 has biased composition (basic and acidic residues).

This sequence belongs to the DEAD box helicase family. DDX18/HAS1 subfamily.

It carries out the reaction ATP + H2O = ADP + phosphate + H(+). In Oryza sativa subsp. japonica (Rice), this protein is DEAD-box ATP-dependent RNA helicase 27.